We begin with the raw amino-acid sequence, 249 residues long: Enolase-phosphatase E1 (249 aa).

It belongs to the HAD-like hydrolase superfamily. MasA/MtnC family. As to quaternary structure, monomer. The cofactor is Mg(2+).

It catalyses the reaction 5-methylsulfanyl-2,3-dioxopentyl phosphate + H2O = 1,2-dihydroxy-5-(methylsulfanyl)pent-1-en-3-one + phosphate. Its pathway is amino-acid biosynthesis; L-methionine biosynthesis via salvage pathway; L-methionine from S-methyl-5-thio-alpha-D-ribose 1-phosphate: step 3/6. It participates in amino-acid biosynthesis; L-methionine biosynthesis via salvage pathway; L-methionine from S-methyl-5-thio-alpha-D-ribose 1-phosphate: step 4/6. In terms of biological role, bifunctional enzyme that catalyzes the enolization of 2,3-diketo-5-methylthiopentyl-1-phosphate (DK-MTP-1-P) into the intermediate 2-hydroxy-3-keto-5-methylthiopentenyl-1-phosphate (HK-MTPenyl-1-P), which is then dephosphorylated to form the acireductone 1,2-dihydroxy-3-keto-5-methylthiopentene (DHK-MTPene). The protein is Enolase-phosphatase E1 of Synechococcus sp. (strain CC9605).